Consider the following 377-residue polypeptide: Nitric oxide reductase FlRd-NAD(+) reductase (377 aa).

Belongs to the FAD-dependent oxidoreductase family. FAD is required as a cofactor.

It is found in the cytoplasm. It carries out the reaction 2 reduced [nitric oxide reductase rubredoxin domain] + NAD(+) + H(+) = 2 oxidized [nitric oxide reductase rubredoxin domain] + NADH. The protein operates within nitrogen metabolism; nitric oxide reduction. Functionally, one of at least two accessory proteins for anaerobic nitric oxide (NO) reductase. Reduces the rubredoxin moiety of NO reductase. This is Nitric oxide reductase FlRd-NAD(+) reductase from Enterobacter sp. (strain 638).